The following is a 217-amino-acid chain: Adenylate kinase (217 aa).

10 to 15 (GAGKGT) lines the ATP pocket. An NMP region spans residues 30–59 (STGDMFRAAMKEGTPLGLQAKEYIDRGDLV). AMP is bound by residues T31, R36, 57-59 (DLV), 85-88 (GFPR), and Q92. The interval 126–163 (GRRICRNCGATYHLVFHPPAQPGVCDKCGGELYQRPDD) is LID. R127 is an ATP binding site. 2 residues coordinate Zn(2+): C130 and C133. 136-137 (TY) lines the ATP pocket. Residues C150 and C153 each coordinate Zn(2+). AMP-binding residues include R160 and R171. Residue Q199 participates in ATP binding.

The protein belongs to the adenylate kinase family. In terms of assembly, monomer.

It localises to the cytoplasm. It catalyses the reaction AMP + ATP = 2 ADP. Its pathway is purine metabolism; AMP biosynthesis via salvage pathway; AMP from ADP: step 1/1. Catalyzes the reversible transfer of the terminal phosphate group between ATP and AMP. Plays an important role in cellular energy homeostasis and in adenine nucleotide metabolism. The chain is Adenylate kinase from Geobacillus thermodenitrificans (strain NG80-2).